A 198-amino-acid chain; its full sequence is Protein-L-isoaspartate O-methyltransferase (198 aa).

Ser50 is an active-site residue.

This sequence belongs to the methyltransferase superfamily. L-isoaspartyl/D-aspartyl protein methyltransferase family.

Its subcellular location is the cytoplasm. The catalysed reaction is [protein]-L-isoaspartate + S-adenosyl-L-methionine = [protein]-L-isoaspartate alpha-methyl ester + S-adenosyl-L-homocysteine. In terms of biological role, catalyzes the methyl esterification of L-isoaspartyl residues in peptides and proteins that result from spontaneous decomposition of normal L-aspartyl and L-asparaginyl residues. It plays a role in the repair and/or degradation of damaged proteins. In Thermosipho melanesiensis (strain DSM 12029 / CIP 104789 / BI429), this protein is Protein-L-isoaspartate O-methyltransferase.